The sequence spans 388 residues: Putative 8-amino-7-oxononanoate synthase (388 aa).

R22 contacts substrate. 109–110 provides a ligand contact to pyridoxal 5'-phosphate; it reads GY. H134 provides a ligand contact to substrate. Pyridoxal 5'-phosphate contacts are provided by residues S182, 207-210, and 237-240; these read DEAH and TLSK. K240 is subject to N6-(pyridoxal phosphate)lysine. A substrate-binding site is contributed by T354.

It belongs to the class-II pyridoxal-phosphate-dependent aminotransferase family. BioF subfamily. In terms of assembly, homodimer. It depends on pyridoxal 5'-phosphate as a cofactor.

It catalyses the reaction 6-carboxyhexanoyl-[ACP] + L-alanine + H(+) = (8S)-8-amino-7-oxononanoate + holo-[ACP] + CO2. It functions in the pathway cofactor biosynthesis; biotin biosynthesis. Functionally, catalyzes the decarboxylative condensation of pimeloyl-[acyl-carrier protein] and L-alanine to produce 8-amino-7-oxononanoate (AON), [acyl-carrier protein], and carbon dioxide. This is Putative 8-amino-7-oxononanoate synthase (bioF) from Gloeobacter violaceus (strain ATCC 29082 / PCC 7421).